The sequence spans 134 residues: Lymphocyte antigen 6I (134 aa).

The first 21 residues, 1–21, serve as a signal peptide directing secretion; that stretch reads MDTSHAIKSCVLILLVTLLCA. The region spanning 27–105 is the UPAR/Ly6 domain; it reads LECYQCYGVP…ISCCQEDLCN (79 aa). 5 disulfides stabilise this stretch: C29–C53, C32–C41, C46–C74, C78–C98, and C99–C104. Residue N95 is glycosylated (N-linked (GlcNAc...) asparagine). G112 is lipidated: GPI-anchor amidated glycine. Positions 113–134 are cleaved as a propeptide — removed in mature form; the sequence is SSWTTAGVLLFSLGSVLLQTLM.

As to expression, expressed in hematopoietic tissue (spleen, thymus, bone marrow). Also found in peritoneal macrophages, peripheral blood leukocytes, liver, heart, brain, kidney and lung.

Its subcellular location is the cell membrane. This chain is Lymphocyte antigen 6I (Ly6i), found in Mus musculus (Mouse).